Here is a 1179-residue protein sequence, read N- to C-terminus: DNA-directed RNA polymerase subunit beta (1179 aa).

The segment covering 1153-1162 (MREMEDEDEG) has biased composition (acidic residues). Residues 1153 to 1179 (MREMEDEDEGNGEKLNLVLEGGSLNEE) form a disordered region.

It belongs to the RNA polymerase beta chain family. The RNAP catalytic core consists of 2 alpha, 1 beta, 1 beta' and 1 omega subunit. When a sigma factor is associated with the core the holoenzyme is formed, which can initiate transcription.

It catalyses the reaction RNA(n) + a ribonucleoside 5'-triphosphate = RNA(n+1) + diphosphate. Its function is as follows. DNA-dependent RNA polymerase catalyzes the transcription of DNA into RNA using the four ribonucleoside triphosphates as substrates. This chain is DNA-directed RNA polymerase subunit beta, found in Brevibacillus brevis (strain 47 / JCM 6285 / NBRC 100599).